The primary structure comprises 152 residues: Glutaredoxin-related protein 5, mitochondrial (152 aa).

The transit peptide at methionine 1–alanine 31 directs the protein to the mitochondrion. The Glutaredoxin domain maps to alanine 38 to serine 141. Lysine 55 contributes to the glutathione binding site. The residue at position 55 (lysine 55) is an N6-succinyllysine. Cysteine 63 contributes to the [2Fe-2S] cluster binding site. Glutathione is bound by residues arginine 93–lysine 97, isoleucine 105, and cysteine 118–aspartate 119. A Phosphoserine modification is found at serine 151.

The protein belongs to the glutaredoxin family. Monothiol subfamily. Homodimer. Interacts with ISCU. Interacts with BOLA1. As to expression, detected in bone, liver, muscle and kidney.

The protein localises to the mitochondrion matrix. Monothiol glutaredoxin involved in mitochondrial iron-sulfur (Fe/S) cluster transfer. Receives 2Fe/2S clusters from scaffold protein ISCU and mediates their transfer to apoproteins, to the 4Fe/FS cluster biosynthesis machinery, or export from mitochondrion. Required for normal regulation of hemoglobin synthesis by the iron-sulfur protein ACO1. The protein is Glutaredoxin-related protein 5, mitochondrial (Glrx5) of Mus musculus (Mouse).